The sequence spans 87 residues: UPF0248 protein TSIB_1445 (87 aa).

The protein belongs to the UPF0248 family.

This chain is UPF0248 protein TSIB_1445, found in Thermococcus sibiricus (strain DSM 12597 / MM 739).